We begin with the raw amino-acid sequence, 369 residues long: Protein-glutamate methylesterase/protein-glutamine glutaminase of group 3 operon (369 aa).

Residues 11 to 128 enclose the Response regulatory domain; sequence RVLIVDDSAA…DLERQEASIR (118 aa). Asp-62 is subject to 4-aspartylphosphate. Residues 136–168 are disordered; that stretch reads ATETTRRRSQPEPRPLAPGPKLTADEILPARPP. The region spanning 170–358 is the CheB-type methylesterase domain; it reads PVPETMPVVC…LDRLAARIME (189 aa). Catalysis depends on residues Ser-183, His-209, and Asp-305.

It belongs to the CheB family. Phosphorylated in vitro by CheA2, but not by CheA1. Phosphorylation of the N-terminal regulatory domain activates the methylesterase activity.

The protein localises to the cytoplasm. The catalysed reaction is [protein]-L-glutamate 5-O-methyl ester + H2O = L-glutamyl-[protein] + methanol + H(+). It catalyses the reaction L-glutaminyl-[protein] + H2O = L-glutamyl-[protein] + NH4(+). Its function is as follows. Involved in chemotaxis. Part of a chemotaxis signal transduction system that modulates chemotaxis in response to various stimuli. Catalyzes the demethylation of specific methylglutamate residues introduced into the chemoreceptors (methyl-accepting chemotaxis proteins or MCP) by CheR. Also mediates the irreversible deamidation of specific glutamine residues to glutamic acid. This is Protein-glutamate methylesterase/protein-glutamine glutaminase of group 3 operon (cheB3) from Cereibacter sphaeroides (Rhodobacter sphaeroides).